The following is a 116-amino-acid chain: uncharacterized protein (116 aa).

This is an uncharacterized protein from Acheta domesticus (House cricket).